The chain runs to 710 residues: Polyribonucleotide nucleotidyltransferase (710 aa).

Mg(2+)-binding residues include aspartate 489 and aspartate 495. The KH domain occupies 556–615 (PKIDTIKIDVDKIKVVIGKGGETIDKIIAETGVKIDIDDEGNVSIYSSDQAAIDRTKEII). Residues 625-693 (GEVYHAKVIR…EKGRVDASMK (69 aa)) enclose the S1 motif domain. The disordered stretch occupies residues 691–710 (SMKALIPRPPKPEKKEEKHD). Residues 700 to 710 (PKPEKKEEKHD) show a composition bias toward basic and acidic residues.

This sequence belongs to the polyribonucleotide nucleotidyltransferase family. It depends on Mg(2+) as a cofactor.

The protein resides in the cytoplasm. The catalysed reaction is RNA(n+1) + phosphate = RNA(n) + a ribonucleoside 5'-diphosphate. In terms of biological role, involved in mRNA degradation. Catalyzes the phosphorolysis of single-stranded polyribonucleotides processively in the 3'- to 5'-direction. In Streptococcus pyogenes serotype M18 (strain MGAS8232), this protein is Polyribonucleotide nucleotidyltransferase.